Reading from the N-terminus, the 1500-residue chain is Carbamoyl-phosphate synthase [ammonia], mitochondrial (1500 aa).

A mitochondrion-targeting transit peptide spans 1–38 (MTRILTACKVVKTLKSGFGLANVTSKRQWDFSRPGIRL). The anthranilate phosphoribosyltransferase homolog stretch occupies residues 39–218 (LSVKAQTAHI…VKVFGKGNPT (180 aa)). Lysine 55, lysine 57, and lysine 119 each carry N6-acetyllysine; alternate. An N6-glutaryllysine; alternate modification is found at lysine 55. 3 positions are modified to N6-succinyllysine; alternate: lysine 55, lysine 57, and lysine 119. Position 148 is a phosphoserine (serine 148). Lysine 157 and lysine 171 each carry N6-acetyllysine; alternate. Position 157 is an N6-succinyllysine; alternate (lysine 157). Lysine 171 bears the N6-glutaryllysine; alternate mark. Lysine 176 carries the N6-glutaryllysine modification. Lysine 182 carries the N6-acetyllysine modification. Serine 189 carries the post-translational modification Phosphoserine. Lysine 197 carries the post-translational modification N6-acetyllysine. 5 positions are modified to N6-acetyllysine; alternate: lysine 207, lysine 210, lysine 214, lysine 219, and lysine 228. N6-glutaryllysine; alternate occurs at positions 207, 210, 214, 219, and 228. Lysine 207 carries the post-translational modification N6-succinyllysine; alternate. Residue lysine 214 is modified to N6-succinyllysine; alternate. A Glutamine amidotransferase type-1 domain is found at 219–404 (KVVAVDCGIK…FSLIKKGKGT (186 aa)). Lysine 237 is modified (N6-glutaryllysine). Lysine 279 is modified (N6-acetyllysine). Lysine 280, lysine 287, lysine 307, and lysine 310 each carry N6-acetyllysine; alternate. Lysine 280 is modified (N6-glutaryllysine; alternate). Lysine 287 and lysine 307 each carry N6-succinyllysine; alternate. An N6-glutaryllysine; alternate mark is found at lysine 307 and lysine 310. The residue at position 400 (lysine 400) is an N6-succinyllysine. Residues lysine 402, lysine 412, lysine 453, and lysine 458 each carry the N6-glutaryllysine; alternate modification. An N6-succinyllysine; alternate mark is found at lysine 402 and lysine 412. Residues lysine 412, lysine 453, lysine 458, lysine 522, lysine 527, and lysine 532 each carry the N6-acetyllysine; alternate modification. 3 positions are modified to N6-succinyllysine; alternate: lysine 458, lysine 522, and lysine 527. Residues lysine 527 and lysine 532 each carry the N6-glutaryllysine; alternate modification. The residue at position 537 (serine 537) is a Phosphoserine; alternate. O-linked (GlcNAc) serine; alternate glycosylation is present at serine 537. Position 540 is a phosphoserine (serine 540). An ATP-grasp 1 domain is found at 551-743 (SDKLNEINEK…LAFIAAKIAL (193 aa)). Residues lysine 553 and lysine 560 each carry the N6-acetyllysine; alternate modification. N6-glutaryllysine; alternate is present on lysine 553. N6-succinyllysine; alternate occurs at positions 553 and 560. Residue serine 569 is modified to Phosphoserine. An N6-acetyllysine; alternate mark is found at lysine 575, lysine 603, and lysine 612. 3 positions are modified to N6-succinyllysine; alternate: lysine 575, lysine 603, and lysine 612. Lysine 630 is modified (N6-acetyllysine). At lysine 728 the chain carries N6-glutaryllysine. Residues lysine 751, lysine 757, lysine 772, lysine 793, lysine 811, lysine 831, lysine 841, and lysine 856 each carry the N6-acetyllysine; alternate modification. 2 positions are modified to N6-succinyllysine; alternate: lysine 751 and lysine 757. An N6-glutaryllysine; alternate mark is found at lysine 757, lysine 772, lysine 793, and lysine 811. Residue lysine 793 is modified to N6-succinyllysine; alternate. The residue at position 831 (lysine 831) is an N6-succinyllysine; alternate. An N6-glutaryllysine; alternate mark is found at lysine 841 and lysine 856. At lysine 869 the chain carries N6-glutaryllysine. N6-acetyllysine; alternate occurs at positions 875, 889, and 892. An N6-glutaryllysine; alternate mark is found at lysine 875, lysine 889, and lysine 892. Residues lysine 875, lysine 889, and lysine 892 each carry the N6-succinyllysine; alternate modification. Residues serine 896 and serine 898 each carry the phosphoserine modification. An N6-acetyllysine; alternate mark is found at lysine 908, lysine 915, and lysine 919. Lysine 908, lysine 915, and lysine 919 each carry N6-glutaryllysine; alternate. 2 positions are modified to N6-succinyllysine; alternate: lysine 915 and lysine 919. Lysine 935 carries the N6-acetyllysine modification. At serine 1036 the chain carries Phosphoserine. An N6-acetyllysine; alternate modification is found at lysine 1074. Lysine 1074 bears the N6-glutaryllysine; alternate mark. Position 1074 is an N6-succinyllysine; alternate (lysine 1074). Phosphoserine is present on residues serine 1079, serine 1090, and serine 1093. One can recognise an ATP-grasp 2 domain in the interval 1093 to 1284 (SAVLDELKVA…FIDVATKVMI (192 aa)). Lysine 1100 carries the post-translational modification N6-acetyllysine; alternate. Position 1100 is an N6-succinyllysine; alternate (lysine 1100). Lysine 1149 carries the N6-succinyllysine modification. N6-acetyllysine; alternate occurs at positions 1168 and 1183. An N6-glutaryllysine; alternate mark is found at lysine 1168 and lysine 1183. Lysine 1168 and lysine 1183 each carry N6-succinyllysine; alternate. At serine 1203 the chain carries Phosphoserine. Lysine 1222 is modified (N6-acetyllysine). The residue at position 1224 (lysine 1224) is an N6-glutaryllysine. N6-acetyllysine; alternate occurs at positions 1232, 1269, and 1291. N6-succinyllysine; alternate is present on residues lysine 1232, lysine 1269, and lysine 1291. O-linked (GlcNAc) serine glycosylation occurs at serine 1331. Threonine 1332 carries O-linked (GlcNAc) threonine glycosylation. Positions 1355 to 1500 (FKIPQKGILI…YRQYSAGKAA (146 aa)) constitute an MGS-like domain. Lysine 1356 is modified (N6-acetyllysine; alternate). Lysine 1356 and lysine 1360 each carry N6-glutaryllysine; alternate. Lysine 1356 and lysine 1360 each carry N6-succinyllysine; alternate. Threonine 1391, threonine 1394, and tryptophan 1410 together coordinate N-acetyl-L-glutamate. A phosphoserine mark is found at serine 1419 and serine 1431. N-acetyl-L-glutamate contacts are provided by asparagine 1437 and asparagine 1440. The residue at position 1444 (lysine 1444) is an N6-acetyllysine; alternate. The residue at position 1444 (lysine 1444) is an N6-succinyllysine; alternate. Residue asparagine 1449 participates in N-acetyl-L-glutamate binding. N6-acetyllysine; alternate occurs at positions 1471, 1479, and 1486. An N6-succinyllysine; alternate mark is found at lysine 1471, lysine 1479, and lysine 1486. N6-glutaryllysine; alternate is present on residues lysine 1479 and lysine 1486.

In terms of assembly, can form homooligomers (monomers as predominant form and dimers). 50% of the mature protein that was isolated had Leu-39 as its N-terminal residue and 50% had Ser-40 suggesting two adjacent processing sites. However, the possibility of proteolytic removal of Leu-39 during the isolation of the enzyme cannot be excluded. Undergoes proteolytic cleavage in the C-terminal region corresponding to the loss of approximately 12 AA residues from the C-terminus. Post-translationally, succinylated at Lys-287 and Lys-1291. Desuccinylated at Lys-1291 by SIRT5, leading to activation. In terms of processing, glutarylated. Glutarylation levels increase during fasting. Deglutarylated by SIRT5 at Lys-55, Lys-219, Lys-412, Lys-889, Lys-892, Lys-915, Lys-1360 and Lys-1486, leading to activation. In terms of tissue distribution, primarily in the liver and small intestine.

Its subcellular location is the mitochondrion. It localises to the nucleus. The protein resides in the nucleolus. The protein localises to the cell membrane. The catalysed reaction is hydrogencarbonate + NH4(+) + 2 ATP = carbamoyl phosphate + 2 ADP + phosphate + 2 H(+). Requires N-acetyl-L-glutamate (NAG) as an allosteric activator. N-acetyl-L-beta-phenylglutamate (Phe-NAG) can also activate CPSase I, but with an activation constant that is 2-fold higher than that for NAG. Involved in the urea cycle of ureotelic animals where the enzyme plays an important role in removing excess ammonia from the cell. This Rattus norvegicus (Rat) protein is Carbamoyl-phosphate synthase [ammonia], mitochondrial (Cps1).